We begin with the raw amino-acid sequence, 466 residues long: Pyruvate kinase (466 aa).

R32 is a binding site for substrate. Positions 34, 36, and 66 each coordinate K(+). Residue 34–37 (NTSH) participates in ATP binding. R73 serves as a coordination point for ATP. Mg(2+) is bound at residue E219. Residues G242, D243, and T275 each contribute to the substrate site. Mg(2+) is bound at residue D243.

It belongs to the pyruvate kinase family. In terms of assembly, homotetramer. It depends on a divalent metal cation as a cofactor.

It catalyses the reaction pyruvate + ATP = phosphoenolpyruvate + ADP + H(+). The protein operates within carbohydrate degradation; glycolysis; pyruvate from D-glyceraldehyde 3-phosphate: step 5/5. Allosterically activated by AMP and inhibited by ATP. The protein is Pyruvate kinase (pyk) of Thermotoga maritima (strain ATCC 43589 / DSM 3109 / JCM 10099 / NBRC 100826 / MSB8).